The chain runs to 239 residues: Uridylate kinase (239 aa).

12–15 (KLSG) serves as a coordination point for ATP. Glycine 53 contacts UMP. ATP contacts are provided by glycine 54 and arginine 58. UMP contacts are provided by residues aspartate 73 and 135–142 (TGSPCFTT). 3 residues coordinate ATP: threonine 162, tyrosine 168, and aspartate 171.

It belongs to the UMP kinase family. Homohexamer.

It localises to the cytoplasm. It carries out the reaction UMP + ATP = UDP + ADP. The protein operates within pyrimidine metabolism; CTP biosynthesis via de novo pathway; UDP from UMP (UMPK route): step 1/1. With respect to regulation, inhibited by UTP. Its function is as follows. Catalyzes the reversible phosphorylation of UMP to UDP. This chain is Uridylate kinase, found in Ruthia magnifica subsp. Calyptogena magnifica.